The following is a 290-amino-acid chain: Phosphatidylserine decarboxylase proenzyme (290 aa).

Catalysis depends on charge relay system; for autoendoproteolytic cleavage activity residues Asp96, His153, and Ser257. Catalysis depends on Ser257, which acts as the Schiff-base intermediate with substrate; via pyruvic acid; for decarboxylase activity. Ser257 bears the Pyruvic acid (Ser); by autocatalysis mark.

It belongs to the phosphatidylserine decarboxylase family. PSD-B subfamily. Prokaryotic type I sub-subfamily. In terms of assembly, heterodimer of a large membrane-associated beta subunit and a small pyruvoyl-containing alpha subunit. Pyruvate serves as cofactor. In terms of processing, is synthesized initially as an inactive proenzyme. Formation of the active enzyme involves a self-maturation process in which the active site pyruvoyl group is generated from an internal serine residue via an autocatalytic post-translational modification. Two non-identical subunits are generated from the proenzyme in this reaction, and the pyruvate is formed at the N-terminus of the alpha chain, which is derived from the carboxyl end of the proenzyme. The autoendoproteolytic cleavage occurs by a canonical serine protease mechanism, in which the side chain hydroxyl group of the serine supplies its oxygen atom to form the C-terminus of the beta chain, while the remainder of the serine residue undergoes an oxidative deamination to produce ammonia and the pyruvoyl prosthetic group on the alpha chain. During this reaction, the Ser that is part of the protease active site of the proenzyme becomes the pyruvoyl prosthetic group, which constitutes an essential element of the active site of the mature decarboxylase.

Its subcellular location is the cell membrane. It carries out the reaction a 1,2-diacyl-sn-glycero-3-phospho-L-serine + H(+) = a 1,2-diacyl-sn-glycero-3-phosphoethanolamine + CO2. The protein operates within phospholipid metabolism; phosphatidylethanolamine biosynthesis; phosphatidylethanolamine from CDP-diacylglycerol: step 2/2. In terms of biological role, catalyzes the formation of phosphatidylethanolamine (PtdEtn) from phosphatidylserine (PtdSer). The protein is Phosphatidylserine decarboxylase proenzyme of Haemophilus influenzae (strain ATCC 51907 / DSM 11121 / KW20 / Rd).